The chain runs to 502 residues: Exodeoxyribonuclease 7 large subunit (502 aa).

Residues 474–495 (SAPSTTKKSAPKPAAPKAPKTP) are compositionally biased toward low complexity. The segment at 474–502 (SAPSTTKKSAPKPAAPKAPKTPGEQGSLF) is disordered.

It belongs to the XseA family. In terms of assembly, heterooligomer composed of large and small subunits.

The protein resides in the cytoplasm. It carries out the reaction Exonucleolytic cleavage in either 5'- to 3'- or 3'- to 5'-direction to yield nucleoside 5'-phosphates.. Its function is as follows. Bidirectionally degrades single-stranded DNA into large acid-insoluble oligonucleotides, which are then degraded further into small acid-soluble oligonucleotides. This chain is Exodeoxyribonuclease 7 large subunit, found in Ruegeria sp. (strain TM1040) (Silicibacter sp.).